A 289-amino-acid polypeptide reads, in one-letter code: ATP synthase gamma chain (289 aa).

It belongs to the ATPase gamma chain family. F-type ATPases have 2 components, CF(1) - the catalytic core - and CF(0) - the membrane proton channel. CF(1) has five subunits: alpha(3), beta(3), gamma(1), delta(1), epsilon(1). CF(0) has three main subunits: a, b and c.

The protein localises to the cell inner membrane. Functionally, produces ATP from ADP in the presence of a proton gradient across the membrane. The gamma chain is believed to be important in regulating ATPase activity and the flow of protons through the CF(0) complex. This chain is ATP synthase gamma chain, found in Leptospira biflexa serovar Patoc (strain Patoc 1 / ATCC 23582 / Paris).